The primary structure comprises 171 residues: Adenine phosphoribosyltransferase (171 aa).

Belongs to the purine/pyrimidine phosphoribosyltransferase family. As to quaternary structure, homodimer.

The protein localises to the cytoplasm. The catalysed reaction is AMP + diphosphate = 5-phospho-alpha-D-ribose 1-diphosphate + adenine. It participates in purine metabolism; AMP biosynthesis via salvage pathway; AMP from adenine: step 1/1. Functionally, catalyzes a salvage reaction resulting in the formation of AMP, that is energically less costly than de novo synthesis. The chain is Adenine phosphoribosyltransferase from Halalkalibacterium halodurans (strain ATCC BAA-125 / DSM 18197 / FERM 7344 / JCM 9153 / C-125) (Bacillus halodurans).